The sequence spans 631 residues: UvrABC system protein C (631 aa).

Residues methionine 1–proline 20 are disordered. The 79-residue stretch at methionine 34–valine 112 folds into the GIY-YIG domain. Residues threonine 222–valine 257 enclose the UVR domain.

It belongs to the UvrC family. In terms of assembly, interacts with UvrB in an incision complex.

It localises to the cytoplasm. Functionally, the UvrABC repair system catalyzes the recognition and processing of DNA lesions. UvrC both incises the 5' and 3' sides of the lesion. The N-terminal half is responsible for the 3' incision and the C-terminal half is responsible for the 5' incision. This chain is UvrABC system protein C, found in Jannaschia sp. (strain CCS1).